We begin with the raw amino-acid sequence, 487 residues long: Fatty acid desaturase 2-like protein FADS2B (487 aa).

Residues 1-11 are compositionally biased toward basic and acidic residues; the sequence is MKLEEKLEHNE. The disordered stretch occupies residues 1–20; the sequence is MKLEEKLEHNESLVGKSRPC. Over 1-175 the chain is Cytoplasmic; the sequence is MKLEEKLEHN…AMNMFSANLR (175 aa). A Cytochrome b5 heme-binding domain is found at 62–139; sequence LNLYTWQEIQ…LKPLLIGELS (78 aa). Residues H97 and H120 each contribute to the heme site. A helical membrane pass occupies residues 176 to 196; the sequence is FFFLHLAQILILEISAWLILH. Residues 197-201 are Lumenal-facing; the sequence is HFGSS. A helical transmembrane segment spans residues 202–222; sequence WLVTILISFLLTVSQAQCSFL. Residues 223–307 are Cytoplasmic-facing; it reads QHDLGHLSMF…IKYIDYEKQH (85 aa). The short motif at 224–228 is the Histidine box-1 element; sequence HDLGH. The short motif at 261–265 is the Histidine box-2 element; the sequence is HFQHH. A helical transmembrane segment spans residues 308–328; the sequence is LYFYMVALPFLMPVYFNLQSM. Over 329-349 the chain is Lumenal; the sequence is QVMYLRKYWMDIAWVSSFYIR. The chain crosses the membrane as a helical span at residues 350-370; it reads YFITFGPFYGIFGTVLLIYLV. At 371 to 487 the chain is on the cytoplasmic side; the sequence is KFIESPWIAY…ASLWMNAYYE (117 aa). Residues 426–430 carry the Histidine box-3 motif; it reads QIEHH.

Belongs to the fatty acid desaturase type 1 family.

It localises to the endoplasmic reticulum membrane. The protein operates within lipid metabolism; polyunsaturated fatty acid biosynthesis. The protein is Fatty acid desaturase 2-like protein FADS2B of Mus musculus (Mouse).